A 492-amino-acid polypeptide reads, in one-letter code: Polyamine oxidase 5 (492 aa).

Residues Glu-55, Arg-63, Val-244, and Glu-431 each coordinate FAD. Residues 490-492 (SRL) carry the Microbody targeting signal motif.

It belongs to the flavin monoamine oxidase family. Requires FAD as cofactor. Widely expressed.

The protein resides in the peroxisome. It carries out the reaction spermine + O2 + H2O = 3-aminopropanal + spermidine + H2O2. It catalyses the reaction norspermine + O2 + H2O = norspermidine + 3-aminopropanal + H2O2. The enzyme catalyses thermospermine + O2 + H2O = 3-aminopropanal + spermidine + H2O2. It functions in the pathway amine and polyamine degradation; spermine degradation. Functionally, flavoenzyme involved in polyamine back-conversion. Catalyzes the oxidation of the secondary amino group of polyamines, such as spermine. Substrate preference is spermine &gt; thermospermine &gt; norspermine. No activity detected when putrescine, spermidine or N(1)-acetylspermidine are used as substrates. Plays an important role in the regulation of polyamine intracellular concentration. May play a role in producing hydrogen peroxide during seed germination. The chain is Polyamine oxidase 5 from Oryza sativa subsp. japonica (Rice).